The following is a 248-amino-acid chain: MRLLVSNDDGVYAPGIKALAEALKTIAHVDVVAPDRNCSAASNSLTLTNPLRINRLDNGYIAVNGTPSDCVHIAIREICTEEPELVVSGINAGANMGDDTLYSGTVAAAMEGRFQGLPAIAVSLSARTPVHYDAAAQIALRIVEGLKAHPLPADQILNVNVPDLPLEEIKGIKVTRLGARHRAEGVVRTTDPAGREIFWLGPPGEELDASEGTDFGAVAEGYVSITPLTVDLTAHSQLNALANWIEKI.

Residues Asp-8, Asp-9, Ser-39, and Asn-91 each coordinate a divalent metal cation.

This sequence belongs to the SurE nucleotidase family. A divalent metal cation is required as a cofactor.

The protein localises to the cytoplasm. The catalysed reaction is a ribonucleoside 5'-phosphate + H2O = a ribonucleoside + phosphate. Functionally, nucleotidase that shows phosphatase activity on nucleoside 5'-monophosphates. This is 5'-nucleotidase SurE from Shewanella amazonensis (strain ATCC BAA-1098 / SB2B).